Reading from the N-terminus, the 262-residue chain is MEGFSLRINQFLAHYTKHSRREAEKLVLEGRVKINHEHAKLASVVKENDKVFLDKRLIKPLKNKKFSVLVYHKPKGELVSKADPLKRHVIYESLEKKYAHFAPVGRLDFASEGVLLLSDSKAVVSALMHANLEKEYLVKIQGFVTREMENAMQEGLKLENATKGAHQKTPIKSMEFAPFIGYEIIKNHAKYSKLRVIINEGKNRELRRFFAFFNAGVLDLRRVRYGFVNLNALPVGKARFLNRQEYNELHAFMANRANVKGD.

An S4 RNA-binding domain is found at 6–70; that stretch reads LRINQFLAHY…LKNKKFSVLV (65 aa). Asp108 (nucleophile) is an active-site residue.

It belongs to the pseudouridine synthase RsuA family.

The enzyme catalyses a uridine in RNA = a pseudouridine in RNA. This is an uncharacterized protein from Helicobacter pylori (strain J99 / ATCC 700824) (Campylobacter pylori J99).